We begin with the raw amino-acid sequence, 354 residues long: Bergaptol O-methyltransferase (354 aa).

His-121 lines the bergaptol pocket. S-adenosyl-L-homocysteine contacts are provided by Ser-174, Gly-198, Asp-221, and Lys-255. Residue His-259 coordinates bergaptol. The Proton acceptor role is filled by His-259.

The protein belongs to the class I-like SAM-binding methyltransferase superfamily. Cation-independent O-methyltransferase family. COMT subfamily.

The catalysed reaction is a 5-hydroxyfurocoumarin + S-adenosyl-L-methionine = a 5-methoxyfurocoumarin + S-adenosyl-L-homocysteine + H(+). It catalyses the reaction bergaptol + S-adenosyl-L-methionine = bergapten + S-adenosyl-L-homocysteine. Inhibited by Cu(2+), Ni(2+) and Co(2+). This is Bergaptol O-methyltransferase from Ammi majus (Bishop's weed).